The primary structure comprises 141 residues: Large ribosomal subunit protein uL16 (141 aa).

The protein belongs to the universal ribosomal protein uL16 family. Part of the 50S ribosomal subunit.

Functionally, binds 23S rRNA and is also seen to make contacts with the A and possibly P site tRNAs. In Nostoc punctiforme (strain ATCC 29133 / PCC 73102), this protein is Large ribosomal subunit protein uL16.